Reading from the N-terminus, the 305-residue chain is Glycine--tRNA ligase alpha subunit (305 aa).

It belongs to the class-II aminoacyl-tRNA synthetase family. Tetramer of two alpha and two beta subunits.

The protein resides in the cytoplasm. It catalyses the reaction tRNA(Gly) + glycine + ATP = glycyl-tRNA(Gly) + AMP + diphosphate. This Streptococcus mutans serotype c (strain ATCC 700610 / UA159) protein is Glycine--tRNA ligase alpha subunit.